The chain runs to 550 residues: Glucose-6-phosphate isomerase (550 aa).

Residue Glu356 is the Proton donor of the active site. Active-site residues include His387 and Lys515.

The protein belongs to the GPI family.

The protein localises to the cytoplasm. It catalyses the reaction alpha-D-glucose 6-phosphate = beta-D-fructose 6-phosphate. The protein operates within carbohydrate biosynthesis; gluconeogenesis. It participates in carbohydrate degradation; glycolysis; D-glyceraldehyde 3-phosphate and glycerone phosphate from D-glucose: step 2/4. Its function is as follows. Catalyzes the reversible isomerization of glucose-6-phosphate to fructose-6-phosphate. The chain is Glucose-6-phosphate isomerase from Vibrio cholerae serotype O1 (strain ATCC 39315 / El Tor Inaba N16961).